The sequence spans 730 residues: Cyclin-T2 (730 aa).

Residues 1–300 form an interaction with MDFIC and MDFI region; it reads MASGRGASSR…SVTGVPTNPS (300 aa). One can recognise a Cyclin N-terminal domain in the interval 12–147; sequence FFTREQLENT…IMLQTLGFEI (136 aa). Positions 250 to 300 are interaction with POLR2A; that stretch reads RLKKIRNWRANQAARKPKVDGQVSETPLLGSSLVQNSILVDSVTGVPTNPS. 2 stretches are compositionally biased toward polar residues: residues 341-350 and 360-389; these read TSYGLSSHQE and TEQLYSQKQETSLSGSQYNINFQQGPSISL. Residues 341–430 are disordered; sequence TSYGLSSHQE…GPISTTPGII (90 aa). Positions 398–412 are enriched in basic and acidic residues; the sequence is DKISDHSSVKQEYTH. Lysine 407 participates in a covalent cross-link: Glycyl lysine isopeptide (Lys-Gly) (interchain with G-Cter in SUMO2). Residue serine 480 is modified to Phosphoserine. The tract at residues 497-652 is disordered; the sequence is DKKEKSGSLK…SSSSSSSSVK (156 aa). Composition is skewed to basic and acidic residues over residues 517 to 543 and 552 to 565; these read SASKEELKMKIKVSSSERHSSSDEGSG and ISRDHKEKHKEHPS. Positions 566 to 578 are enriched in basic residues; it reads SRHHTSSHKHSHS. The span at 579–588 shows a compositional bias: low complexity; that stretch reads HSGSSSGGSK. The residue at position 601 (serine 601) is a Phosphoserine. 2 stretches are compositionally biased toward low complexity: residues 606-616 and 637-652; these read SSDGISSSSSS and SSKSSGSSSSSSSSVK.

It belongs to the cyclin family. Cyclin C subfamily. As to quaternary structure, interacts with CDK9 to form P-TEFb. Interacts with POLR2A (via the C-terminal domain (CTD)); mediates transcriptional activity. Interacts with HEXIM1; mediates formation of a tripartite complex with KPNA2. Interacts with HEXIM2. Interacts with PKN1; enhances MYOD1-dependent transcription. P-TEFB complex interacts with RB1; promotes phosphorylation of RB1. P-TEFB complex interacts with MYOD1; promotes the transcriptional activity of MYOD1 through its CDK9-mediated phosphorylation. Interacts with MDFI and MDFIC. Interacts with MON1B; down-regulates CCNT2-mediated activation of viral promoters during herpes simplex virus 1/HHV-1 infection. (Microbial infection) Interacts with HIV-2 and SIV Tat. Does not bind efficiently to the transactivation domain of the HIV-1 Tat. Ubiquitously expressed.

It is found in the cytoplasm. The protein localises to the perinuclear region. The protein resides in the nucleus. In terms of biological role, regulatory subunit of the cyclin-dependent kinase pair (CDK9/cyclin T) complex, also called positive transcription elongation factor B (P-TEFB), which is proposed to facilitate the transition from abortive to production elongation by phosphorylating the CTD (carboxy-terminal domain) of the large subunit of RNA polymerase II (RNAP II). The activity of this complex is regulated by binding with 7SK snRNA. Plays a role during muscle differentiation; P-TEFB complex interacts with MYOD1; this tripartite complex promotes the transcriptional activity of MYOD1 through its CDK9-mediated phosphorylation and binds the chromatin of promoters and enhancers of muscle-specific genes; this event correlates with hyperphosphorylation of the CTD domain of RNA pol II. In addition, enhances MYOD1-dependent transcription through interaction with PKN1. Involved in early embryo development. Functionally, (Microbial infection) Promotes transcriptional activation of early and late herpes simplex virus 1/HHV-1 promoters. The polypeptide is Cyclin-T2 (Homo sapiens (Human)).